A 443-amino-acid chain; its full sequence is MQVTETLNEGLKRGYNIVVSAAELDAKVNEKLVEAQPEIEMKGFRKGKVPMALLKKQFGQRLLGEAMQETIDGAMNKHFEDSGDRPALQPEVKMTNEDWKEGDDVEVAMSYEALPAIPEVDMSDIALEKLVVKADDAAIDEALGNLAETAQDFKARRKGSKAKDGDQVVMDFVGKVDGEAFEGGSAEDYPLVLGSNSFIPGFEEQLVGVKAEEEKDVTVTFPEEYGAEHLAGKEAVFTCTIKEVKEPVAAEIDDELAKKFGAEDLAALKSQIAERLEAEYAGASRAVMKRGLLDALDAKVSFDLPPSLVDAEAKQIAHQLWHEENPEVHDHNHGEIEATEEHTKLAERRVRLGLLLAELGQKAEVEVTDAEMTQAILGQARQYPGQERQFFEFVQKNPQMQQQLRAPIFEDKVVDHIVAQAKVTEKEISKDDLQKALEALDAE.

The 86-residue stretch at 165 to 250 (GDQVVMDFVG…IKEVKEPVAA (86 aa)) folds into the PPIase FKBP-type domain.

Belongs to the FKBP-type PPIase family. Tig subfamily.

It localises to the cytoplasm. It catalyses the reaction [protein]-peptidylproline (omega=180) = [protein]-peptidylproline (omega=0). Its function is as follows. Involved in protein export. Acts as a chaperone by maintaining the newly synthesized protein in an open conformation. Functions as a peptidyl-prolyl cis-trans isomerase. This is Trigger factor from Ruegeria pomeroyi (strain ATCC 700808 / DSM 15171 / DSS-3) (Silicibacter pomeroyi).